The chain runs to 504 residues: DnaJ homolog subfamily C member 3 (504 aa).

The first 31 residues, 1–31 (MVAPGSVTSRLGSVFPFLLVLVDLQYEGAEC), serve as a signal peptide directing secretion. TPR repeat units follow at residues 37–70 (VEKHLELGKKLLAAGQLADALSQFHAAVDGDPDN), 72–104 (IAYYRRATVFLAMGKSKAALPDLTKVIQLKMDF), 105–138 (TAARLQRGHLLLKQGKLDEAEDDFKKVLKSNPSE), 154–187 (MQRLRSQALNAFGSGDYTAAIAFLDKILEVCVWD), 189–221 (ELRELRAECFIKEGEPRKAISDLKAASKLKNDN), 222–255 (TEAFYKISTLYYQLGDHELSLSEVRECLKLDQDH), 268–301 (LNKLIESAEELIRDGRYTDATSKYESVMKTEPSI), 306–339 (VRSKERICHCFSKDEKPVEAIRVCSEVLQMEPDN), and 340–373 (VNALKDRAEAYLIEEMYDEAIQDYETAQEHNEND). An intrachain disulfide couples cysteine 248 to cysteine 258. At serine 274 the chain carries Phosphoserine; by FAM20C. A disulfide bond links cysteine 313 and cysteine 329. Residues 375 to 393 (QIREGLEKAQRLLKQSQKR) form a flexible linker region. Residues 394–462 (DYYKILGVKR…EMRKKFDDGE (69 aa)) form the J domain. Residues 451 to 481 (DPEMRKKFDDGEDPLDAESQQGGGGNPFHRS) are disordered.

As to quaternary structure, interacts with EIF2AK4/GCN2; this interaction occurs under endoplasmic reticulum (ER) stress, hypothermic and amino acid starving stress conditions and inhibits EIF2AK4/GCN2 kinase activity. Interacts with EIF2AK3. Interacts with EIF2AK2. Forms a trimeric complex with DNAJB1 and HSPA8. Interacts with THAP12. In terms of tissue distribution, widely expressed with high level in the pancreas and testis. Also expressed in cell lines with different levels.

It is found in the endoplasmic reticulum. In terms of biological role, involved in the unfolded protein response (UPR) during endoplasmic reticulum (ER) stress. Acts as a negative regulator of the EIF2AK4/GCN2 kinase activity by preventing the phosphorylation of eIF-2-alpha at 'Ser-52' and hence attenuating general protein synthesis under ER stress, hypothermic and amino acid starving stress conditions. Co-chaperone of HSPA8/HSC70, it stimulates its ATPase activity. May inhibit both the autophosphorylation of EIF2AK2/PKR and the ability of EIF2AK2 to catalyze phosphorylation of the EIF2A. May inhibit EIF2AK3/PERK activity. The protein is DnaJ homolog subfamily C member 3 (DNAJC3) of Homo sapiens (Human).